Consider the following 419-residue polypeptide: Pregnancy-specific beta-1-glycoprotein 4 (419 aa).

A signal peptide spans 1–34; that stretch reads MGPLSAPPCTQRITWKGVLLTASLLNFWNPPTTA. The Ig-like V-type domain occupies 35–144; that stretch reads QVTIEAQPPK…TGHFTFTLHL (110 aa). N-linked (GlcNAc...) asparagine glycosylation is found at asparagine 104, asparagine 111, asparagine 199, asparagine 268, asparagine 299, and asparagine 303. Ig-like C2-type domains are found at residues 147 to 234, 237 to 327, and 332 to 410; these read PKPS…VTLN, PKLS…VTLN, and PDLP…KSIT. Intrachain disulfides connect cysteine 169–cysteine 217, cysteine 262–cysteine 310, and cysteine 354–cysteine 394.

This sequence belongs to the immunoglobulin superfamily. CEA family.

The protein resides in the secreted. The chain is Pregnancy-specific beta-1-glycoprotein 4 (PSG4) from Homo sapiens (Human).